Consider the following 76-residue polypeptide: Small ribosomal subunit protein bS18 (76 aa).

The protein belongs to the bacterial ribosomal protein bS18 family. In terms of assembly, part of the 30S ribosomal subunit. Forms a tight heterodimer with protein bS6.

Binds as a heterodimer with protein bS6 to the central domain of the 16S rRNA, where it helps stabilize the platform of the 30S subunit. The polypeptide is Small ribosomal subunit protein bS18 (Xanthomonas euvesicatoria pv. vesicatoria (strain 85-10) (Xanthomonas campestris pv. vesicatoria)).